The following is a 474-amino-acid chain: tRNA-2-methylthio-N(6)-dimethylallyladenosine synthase (474 aa).

The region spanning 3–120 is the MTTase N-terminal domain; sequence KKLLIKTWGC…LPQMIKDSQS (118 aa). [4Fe-4S] cluster-binding residues include Cys12, Cys49, Cys83, Cys157, Cys161, and Cys164. Residues 143–375 enclose the Radical SAM core domain; it reads RADGVTAFVS…QQQINTQAMR (233 aa). Positions 378–441 constitute a TRAM domain; the sequence is RQMLNTEQRI…TNSLRGELVR (64 aa).

It belongs to the methylthiotransferase family. MiaB subfamily. Monomer. [4Fe-4S] cluster is required as a cofactor.

It is found in the cytoplasm. It catalyses the reaction N(6)-dimethylallyladenosine(37) in tRNA + (sulfur carrier)-SH + AH2 + 2 S-adenosyl-L-methionine = 2-methylsulfanyl-N(6)-dimethylallyladenosine(37) in tRNA + (sulfur carrier)-H + 5'-deoxyadenosine + L-methionine + A + S-adenosyl-L-homocysteine + 2 H(+). Its function is as follows. Catalyzes the methylthiolation of N6-(dimethylallyl)adenosine (i(6)A), leading to the formation of 2-methylthio-N6-(dimethylallyl)adenosine (ms(2)i(6)A) at position 37 in tRNAs that read codons beginning with uridine. The protein is tRNA-2-methylthio-N(6)-dimethylallyladenosine synthase of Photobacterium profundum (strain SS9).